We begin with the raw amino-acid sequence, 221 residues long: Protein-L-isoaspartate O-methyltransferase (221 aa).

The active site involves serine 64.

This sequence belongs to the methyltransferase superfamily. L-isoaspartyl/D-aspartyl protein methyltransferase family.

It is found in the cytoplasm. It carries out the reaction [protein]-L-isoaspartate + S-adenosyl-L-methionine = [protein]-L-isoaspartate alpha-methyl ester + S-adenosyl-L-homocysteine. Its function is as follows. Catalyzes the methyl esterification of L-isoaspartyl residues in peptides and proteins that result from spontaneous decomposition of normal L-aspartyl and L-asparaginyl residues. It plays a role in the repair and/or degradation of damaged proteins. This Thermococcus sibiricus (strain DSM 12597 / MM 739) protein is Protein-L-isoaspartate O-methyltransferase.